We begin with the raw amino-acid sequence, 860 residues long: DNA mismatch repair protein MutS (860 aa).

Position 618–625 (618–625 (GPNMGGKS)) interacts with ATP.

Belongs to the DNA mismatch repair MutS family.

This protein is involved in the repair of mismatches in DNA. It is possible that it carries out the mismatch recognition step. This protein has a weak ATPase activity. In Hahella chejuensis (strain KCTC 2396), this protein is DNA mismatch repair protein MutS.